A 1530-amino-acid chain; its full sequence is Neurexin-1 (1530 aa).

A signal peptide spans 1 to 30 (MGTALLQRGGCFLLCLSLLLLGCWAELGSG). A Laminin G-like 1 domain is found at 31–212 (LEFPGAEGQW…KLDDEPPNSG (182 aa)). Over 31 to 1454 (LEFPGAEGQW…EVIRESSSTT (1424 aa)) the chain is Extracellular. 2 N-linked (GlcNAc...) asparagine glycosylation sites follow: asparagine 125 and asparagine 190. A disordered region spans residues 199-221 (SGEVKLDDEPPNSGGGSPCEAGE). Residues 213–256 (GGSPCEAGEEGEGGVCLNGGVCSVVDDQAVCDCSRTGFRGKDCS) form the EGF-like 1 domain. Disulfide bonds link cysteine 228–cysteine 243 and cysteine 245–cysteine 255. 2 Laminin G-like domains span residues 299–496 (IATF…AFKC) and 503–695 (DPIT…KPSC). Ca(2+) is bound by residues aspartate 345, leucine 362, and methionine 430. Disulfide bonds link cysteine 460–cysteine 496, cysteine 666–cysteine 695, cysteine 703–cysteine 714, cysteine 708–cysteine 723, and cysteine 725–cysteine 735. One can recognise an EGF-like 2 domain in the interval 699 to 736 (TAKPCLSNPCKNNGMCRDGWNRYVCDCSGTGYLGRSCE). Residue serine 705 is glycosylated (O-linked (Glc...) serine). Laminin G-like domains are found at residues 741–914 (VLSY…IDYC) and 928–1103 (DPVT…ERGC). Ca(2+)-binding residues include aspartate 788 and leucine 805. Asparagine 813 is a glycosylation site (N-linked (GlcNAc...) asparagine). Arginine 864 is a binding site for Ca(2+). 5 cysteine pairs are disulfide-bonded: cysteine 906-cysteine 914, cysteine 1075-cysteine 1103, cysteine 1110-cysteine 1121, cysteine 1115-cysteine 1130, and cysteine 1132-cysteine 1142. Positions 1106-1143 (PSTTCQEDSCSNQGVCLQQWDGISCDCSMTSFSGPLCN) constitute an EGF-like 3 domain. The Laminin G-like 6 domain maps to 1149–1347 (YIFSKGGGQI…DANIAIVGNV (199 aa)). Ca(2+)-binding residues include aspartate 1199 and valine 1216. N-linked (GlcNAc...) asparagine glycosylation occurs at asparagine 1246. Ca(2+) contacts are provided by isoleucine 1298 and asparagine 1300. An O-linked (Xyl...) (heparan sulfate) serine glycan is attached at serine 1408. The segment at 1411-1443 (CPSDDEDIDPCEPSSGGLANPTRAGGREPYPGS) is disordered. A helical membrane pass occupies residues 1455-1475 (GMVVGIVAAAALCILILLYAM). Residues 1476 to 1530 (YKYRNRDEGSYHVDESRNYISNSAQSNGAVVKEKQPSSAKSANKNKKNKDKEYYV) are Cytoplasmic-facing. An interaction with CASK region spans residues 1497–1523 (NSAQSNGAVVKEKQPSSAKSANKNKKN). Residues 1497–1530 (NSAQSNGAVVKEKQPSSAKSANKNKKNKDKEYYV) are disordered.

The protein belongs to the neurexin family. Interacts (via laminin G-like domain 2 and/or laminin G-like domain 6) with NLGN1 forming a heterotetramer, where one NLGN1 dimer interacts with one NRXN1 dimer. Also interacts (via laminin G-like domain 2 and/or laminin G-like domain 6) with NLGN2, NLGN3 and NLGN4L; interactions with NLGN1, NLGN2, NLGN3 and NLGN4L are calcium-dependent. Interacts (via cytoplasmic C-terminal region) with CASK (via the PDZ, SH3 and guanylate kinase-like domains). Interacts (via cytoplasmic C-terminus) with CASKIN1 and APBA1. Interacts (via laminin G-like domain 2) with NXPH1 and NXPH3. Alpha-type isoforms (neurexin-1-alpha) interact (via laminin G-like domain 2 and/or laminin G-like domain 6) with DAG1 (via alpha-dystroglycan chain). Interacts with LRRTM1, LRRTM2, LRRTM3 and LRRTM4. Interacts with SYT13 and SYTL1. Interacts with CBLN1, CBLN2 and, less avidly, with CBLN4. Interacts with CLSTN3. Alpha-type isoforms interact with alpha-latrotoxin from spider venom. O-glycosylated; contains heparan sulfate. Heparan sulfate attachment is required for synapse development by mediating interactions with neuroligins and LRRTM2.

The protein resides in the presynaptic cell membrane. In terms of biological role, cell surface protein involved in cell-cell-interactions, exocytosis of secretory granules and regulation of signal transmission. Function is isoform-specific. Alpha-type isoforms have a long N-terminus with six laminin G-like domains and play an important role in synaptic signal transmission. Alpha-type isoforms play a role in the regulation of calcium channel activity and Ca(2+)-triggered neurotransmitter release at synapses and at neuromuscular junctions. They play an important role in Ca(2+)-triggered exocytosis of secretory granules in pituitary gland. They may affect their functions at synapses and in endocrine cells via their interactions with proteins from the exocytotic machinery. Likewise, alpha-type isoforms play a role in regulating the activity of postsynaptic NMDA receptors, a subtype of glutamate-gated ion channels. Both alpha-type and beta-type isoforms may play a role in the formation or maintenance of synaptic junctions via their interactions (via the extracellular domains) with neuroligin family members, CBLN1 or CBLN2. In vitro, triggers the de novo formation of presynaptic structures. May be involved in specification of excitatory synapses. Alpha-type isoforms were first identified as receptors for alpha-latrotoxin from spider venom. The polypeptide is Neurexin-1 (NRXN1) (Bos taurus (Bovine)).